A 184-amino-acid polypeptide reads, in one-letter code: MPHTQTDAHQNNQENFSSSLISSRPSQPMTLSIQRLDHGQGLELPHYATAGSAGLDLRAALSEEETVILAPGQRALIPTGLIFHLSPGFEAQIRPRSGLALKHGITCLNTPGTIDSDYRGEVKVLLINCGQEDFAIKRGMRIAQTVIAPVLQVNVCALEPQQNESTKNTVGNRGAGGFGSTGHD.

Polar residues predominate over residues 1–16 (MPHTQTDAHQNNQENF). Positions 1–25 (MPHTQTDAHQNNQENFSSSLISSRP) are disordered. Residues 96 to 98 (RSG), asparagine 109, 113 to 115 (TID), and lysine 123 contribute to the substrate site. Residues 165–184 (STKNTVGNRGAGGFGSTGHD) form a disordered region. Gly residues predominate over residues 173–184 (RGAGGFGSTGHD).

It belongs to the dUTPase family. Mg(2+) serves as cofactor.

The catalysed reaction is dUTP + H2O = dUMP + diphosphate + H(+). The protein operates within pyrimidine metabolism; dUMP biosynthesis; dUMP from dCTP (dUTP route): step 2/2. Its function is as follows. This enzyme is involved in nucleotide metabolism: it produces dUMP, the immediate precursor of thymidine nucleotides and it decreases the intracellular concentration of dUTP so that uracil cannot be incorporated into DNA. In Bartonella henselae (strain ATCC 49882 / DSM 28221 / CCUG 30454 / Houston 1) (Rochalimaea henselae), this protein is Deoxyuridine 5'-triphosphate nucleotidohydrolase.